Consider the following 115-residue polypeptide: NADH-ubiquinone oxidoreductase chain 3 (115 aa).

3 helical membrane passes run Leu3–Trp23, Phe55–Leu75, and Leu86–Trp106.

Belongs to the complex I subunit 3 family. In terms of assembly, core subunit of respiratory chain NADH dehydrogenase (Complex I) which is composed of 45 different subunits. Interacts with TMEM186. Interacts with TMEM242.

Its subcellular location is the mitochondrion inner membrane. The enzyme catalyses a ubiquinone + NADH + 5 H(+)(in) = a ubiquinol + NAD(+) + 4 H(+)(out). Its function is as follows. Core subunit of the mitochondrial membrane respiratory chain NADH dehydrogenase (Complex I) which catalyzes electron transfer from NADH through the respiratory chain, using ubiquinone as an electron acceptor. Essential for the catalytic activity of complex I. The chain is NADH-ubiquinone oxidoreductase chain 3 from Lemur catta (Ring-tailed lemur).